The sequence spans 476 residues: Adenosylhomocysteinase (476 aa).

Residues Thr-62, Asp-141, and Glu-201 each coordinate substrate. Residue 202-204 participates in NAD(+) binding; sequence TTT. The substrate site is built by Lys-231 and Asp-235. NAD(+)-binding positions include Asn-236, 265-270, Glu-288, Asn-323, 344-346, and Asn-389; these read GYGDVG and IGH.

It belongs to the adenosylhomocysteinase family. It depends on NAD(+) as a cofactor.

It localises to the cytoplasm. It catalyses the reaction S-adenosyl-L-homocysteine + H2O = L-homocysteine + adenosine. It participates in amino-acid biosynthesis; L-homocysteine biosynthesis; L-homocysteine from S-adenosyl-L-homocysteine: step 1/1. In terms of biological role, may play a key role in the regulation of the intracellular concentration of adenosylhomocysteine. The protein is Adenosylhomocysteinase of Myxococcus xanthus (strain DK1622).